A 298-amino-acid polypeptide reads, in one-letter code: uncharacterized protein (298 aa).

A run of 10 helical transmembrane segments spans residues 5 to 25, 36 to 56, 76 to 96, 97 to 117, 124 to 144, 147 to 167, 181 to 201, 216 to 236, 244 to 264, and 272 to 292; these read ILFG…MSAF, MENV…IYPF, VVVG…ISLA, TATA…PLLL, SALI…DPSV, VGLV…LAYI, VILA…FIDI, ILWI…LTYA, IIAP…LYLG, and SSLG…PALL. The EamA 1 domain maps to 17 to 141; that stretch reads LCFGIMSAFV…GLVGVVLISD (125 aa). The EamA 2 domain maps to 183 to 288; the sequence is LAFAFGMSLL…ILCSGLLIAL (106 aa).

This sequence belongs to the EamA transporter family.

The protein resides in the cell membrane. This is an uncharacterized protein from Helicobacter pylori (strain J99 / ATCC 700824) (Campylobacter pylori J99).